The following is a 119-amino-acid chain: NADH-quinone oxidoreductase subunit A (119 aa).

The next 3 membrane-spanning stretches (helical) occupy residues V9–V29, L63–V83, and V88–A108.

It belongs to the complex I subunit 3 family. In terms of assembly, NDH-1 is composed of 14 different subunits. Subunits NuoA, H, J, K, L, M, N constitute the membrane sector of the complex.

It is found in the cell inner membrane. It carries out the reaction a quinone + NADH + 5 H(+)(in) = a quinol + NAD(+) + 4 H(+)(out). In terms of biological role, NDH-1 shuttles electrons from NADH, via FMN and iron-sulfur (Fe-S) centers, to quinones in the respiratory chain. The immediate electron acceptor for the enzyme in this species is believed to be ubiquinone. Couples the redox reaction to proton translocation (for every two electrons transferred, four hydrogen ions are translocated across the cytoplasmic membrane), and thus conserves the redox energy in a proton gradient. In Verminephrobacter eiseniae (strain EF01-2), this protein is NADH-quinone oxidoreductase subunit A.